Here is a 232-residue protein sequence, read N- to C-terminus: MAAEVTETAQPVETAASTDNNREQREPRRGGRERNPNRDRGNRDADKSQFLERVVTINRVSKVVKGGRRFSFTALVVVGDGNGLVGVGYGKAREVPLAISKGVEEAKKNFFRVPRVANTIPHPVQGEAAAGVVLLRPAAAGTGVIAGGPVRAVLECAGIHDVLSKSLGSSNTINIVHATVEALQQLEEPRAVAARRGLDYDRVAPEKLLQIEARAAEAAAAAKKAGAEKVGA.

Positions 1–47 (MAAEVTETAQPVETAASTDNNREQREPRRGGRERNPNRDRGNRDADK) are disordered. Residues 7-19 (ETAQPVETAASTD) show a composition bias toward polar residues. Over residues 20–47 (NNREQREPRRGGRERNPNRDRGNRDADK) the composition is skewed to basic and acidic residues. The S5 DRBM domain maps to 50–113 (FLERVVTINR…EEAKKNFFRV (64 aa)).

It belongs to the universal ribosomal protein uS5 family. As to quaternary structure, part of the 30S ribosomal subunit. Contacts proteins S4 and S8.

Functionally, with S4 and S12 plays an important role in translational accuracy. Located at the back of the 30S subunit body where it stabilizes the conformation of the head with respect to the body. This chain is Small ribosomal subunit protein uS5, found in Leifsonia xyli subsp. xyli (strain CTCB07).